Consider the following 457-residue polypeptide: Paired box protein Pax-8 (457 aa).

Residues 9–135 constitute a DNA-binding region (paired); the sequence is GHGGLNQLGG…SSINRIIRTK (127 aa). Positions 12–68 are PAI subdomain; sequence GLNQLGGAFVNGRPLPEVVRQRIVDLAHQGVRPCDISRQLRVSHGCVSKILGRYYET. An RED subdomain region spans residues 87 to 135; it reads KVVEKIGDYKRQNPTMFAWEIRDRLLAEGVCDNDTVPSVSSINRIIRTK. Over residues 159–182 the composition is skewed to polar residues; that stretch reads LIPSSAVTPPESPQSDSLGSTYSI. The segment at 159 to 224 is disordered; that stretch reads LIPSSAVTPP…SSSSGPRKHL (66 aa). Residue serine 304 is modified to Phosphoserine.

Interacts with WWTR1. In terms of tissue distribution, expressed in the developing excretory system and the thyroid gland.

It is found in the nucleus. Its function is as follows. Thought to encode a transcription factor. It may have a role in kidney cell differentiation. May play a regulatory role in mammalian development. The polypeptide is Paired box protein Pax-8 (Pax8) (Mus musculus (Mouse)).